A 267-amino-acid polypeptide reads, in one-letter code: Small ribosomal subunit protein uS3 (267 aa).

Residues 43–111 (IRKAMSKDLE…QVQLNIFEVK (69 aa)) form the KH type-2 domain. The segment at 216–267 (FEEQQAQQSNNRQGRRGDRRPRRGQRNAAPQQNAAAEAPAAAEAPAATETKE) is disordered. The span at 228–240 (QGRRGDRRPRRGQ) shows a compositional bias: basic residues. Low complexity predominate over residues 241–267 (RNAAPQQNAAAEAPAAAEAPAATETKE).

This sequence belongs to the universal ribosomal protein uS3 family. As to quaternary structure, part of the 30S ribosomal subunit. Forms a tight complex with proteins S10 and S14.

Functionally, binds the lower part of the 30S subunit head. Binds mRNA in the 70S ribosome, positioning it for translation. In Bifidobacterium adolescentis (strain ATCC 15703 / DSM 20083 / NCTC 11814 / E194a), this protein is Small ribosomal subunit protein uS3.